The following is a 138-amino-acid chain: Large ribosomal subunit protein uL16 (138 aa).

The segment covering 1-17 (MLIPRKVKHRKQHHPRQ) has biased composition (basic residues). The disordered stretch occupies residues 1–22 (MLIPRKVKHRKQHHPRQRGIAS).

This sequence belongs to the universal ribosomal protein uL16 family. Part of the 50S ribosomal subunit.

In terms of biological role, binds 23S rRNA and is also seen to make contacts with the A and possibly P site tRNAs. The chain is Large ribosomal subunit protein uL16 from Mycobacterium leprae (strain Br4923).